Here is a 492-residue protein sequence, read N- to C-terminus: Trichothecene C-15 hydroxylase (492 aa).

Residues 6-26 traverse the membrane as a helical segment; sequence LWPLLALSGGTGLAYLVVVVV. Residues 88–106 show a composition bias toward basic and acidic residues; it reads AMKDVRGHRKSGEPEHGKD. The disordered stretch occupies residues 88 to 116; sequence AMKDVRGHRKSGEPEHGKDPISVQSNGDN. Asparagine 124, asparagine 198, and asparagine 290 each carry an N-linked (GlcNAc...) asparagine glycan. Cysteine 438 is a binding site for heme.

It belongs to the cytochrome P450 family. Heme serves as cofactor.

It localises to the membrane. It participates in sesquiterpene biosynthesis; trichothecene biosynthesis. Functionally, trichothecene C-15 hydroxylase; part of the core gene cluster that mediates the biosynthesis of trichothecenes, a very large family of chemically related bicyclic sesquiterpene compounds acting as mycotoxins, including T2-toxin. The biosynthesis of trichothecenes begins with the cyclization of farnesyl diphosphate to trichodiene and is catalyzed by the trichodiene synthase TRI5. Trichodiene undergoes a series of oxygenations catalyzed by the cytochrome P450 monooxygenase TRI4. TRI4 controls the addition of four oxygens at C-2, C-3, C-11, and the C-12, C-13-epoxide to form the intermediate isotrichotriol. Isotrichotriol then undergoes a non-enzymatic isomerization and cyclization to form isotrichodermol. During this process, the oxygen at the C-2 position becomes the pyran ring oxygen and the hydroxyl group at C-11 is lost. More complex type A trichothecenes are built by modifying isotrichodermol through a series of paired hydroxylation and acetylation or acylation steps. Isotrichodermol is converted to isotrichodermin by the acetyltransferase TRI101. TRI101 encodes a C-3 transacetylase that acts as a self-protection or resistance factor during biosynthesis and that the presence of a free C-3 hydroxyl group is a key component of Fusarium trichothecene phytotoxicity. A second hydroxyl group is added to C-15 by the trichothecene C-15 hydroxylase TRI11, producing 15-decalonectrin, which is then acetylated by TRI3, producing calonectrin. A third hydroxyl group is added at C-4 by the cytochrome P450 monooxygenase TRI13, converting calonectrin to 3,15-diacetoxyspirpenol, which is subsequently acetylated by the acetyltransferase TRI7. A fourth hydroxyl group is added to C-8 by the cytochrome P450 monooxygenase TRI1, followed by the addition of an isovaleryl moiety by TRI16. Finally, the acetyl group is removed from the C-3 position by the trichothecene C-3 esterase TRI8 to produce T-2 toxin. This Fusarium sporotrichioides protein is Trichothecene C-15 hydroxylase.